The primary structure comprises 124 residues: Histone H2B (124 aa).

The tract at residues 1–33 (MPEPAKSAPKKGSKKAVTKTAGKGGKKRKRSRK) is disordered. Residues lysine 6 and lysine 11 each carry the N6-acetyllysine modification. Residues 8–17 (APKKGSKKAV) show a composition bias toward basic residues. Serine 13 bears the Phosphoserine mark. Residues lysine 14 and lysine 19 each carry the N6-acetyllysine modification. Serine 111 carries O-linked (GlcNAc) serine glycosylation. Residue lysine 119 forms a Glycyl lysine isopeptide (Lys-Gly) (interchain with G-Cter in ubiquitin) linkage.

Belongs to the histone H2B family. As to quaternary structure, the nucleosome is a histone octamer containing two molecules each of H2A, H2B, H3 and H4 assembled in one H3-H4 heterotetramer and two H2A-H2B heterodimers. The octamer wraps approximately 147 bp of DNA. In terms of processing, monoubiquitination of Lys-119 by BRE1 gives a specific tag for epigenetic transcriptional activation and is also prerequisite for histone H3 'Lys-4' and 'Lys-79' methylation. Phosphorylated during apoptosis; which facilitates apoptotic chromatin condensation. Post-translationally, glcNAcylation at Ser-111 promotes monoubiquitination of Lys-119. It fluctuates in response to extracellular glucose, and associates with transcribed genes.

It localises to the nucleus. Its subcellular location is the chromosome. Core component of nucleosome. Nucleosomes wrap and compact DNA into chromatin, limiting DNA accessibility to the cellular machineries which require DNA as a template. Histones thereby play a central role in transcription regulation, DNA repair, DNA replication and chromosomal stability. DNA accessibility is regulated via a complex set of post-translational modifications of histones, also called histone code, and nucleosome remodeling. The sequence is that of Histone H2B from Oncorhynchus mykiss (Rainbow trout).